Here is a 974-residue protein sequence, read N- to C-terminus: Apical junction component 1 homolog (974 aa).

Disordered stretches follow at residues 23-137, 201-233, and 306-326; these read PGLT…PSYP, ARSS…PRHV, and CSRP…GGSY. Position 52 is a phosphoserine (Ser52). Over residues 69–79 the composition is skewed to pro residues; that stretch reads EPPPPEPAPPR. A compositionally biased stretch (basic and acidic residues) spans 116 to 134; sequence RGREAQRAVRVEGSPRREP. At Ser129 the chain carries Phosphoserine. Polar residues predominate over residues 201 to 216; the sequence is ARSSRSCAPRETTSWA. Arg322 is subject to Omega-N-methylarginine. 3 positions are modified to phosphoserine: Ser468, Ser509, and Ser512. The segment at 539-576 is disordered; it reads DLRSVDRPTAKGWELPGGRPRQPVSTVPEGPASSRQRS. Phosphoserine is present on Ser593. Residues 618–661 are disordered; that stretch reads AGPGGATLLAPSRSPPASAGSTEEPTGSGEAADASPEPSADEDD. Residues 623-636 show a composition bias toward low complexity; sequence ATLLAPSRSPPASA. The residue at position 749 (Arg749) is an Asymmetric dimethylarginine; alternate. Omega-N-methylarginine; alternate is present on Arg749.

The protein resides in the apical cell membrane. Its subcellular location is the cell projection. The protein localises to the cilium. It is found in the cell junction. It localises to the adherens junction. In terms of biological role, may be involved in the control of adherens junction integrity. In Mus musculus (Mouse), this protein is Apical junction component 1 homolog (Ajm1).